Here is a 718-residue protein sequence, read N- to C-terminus: Polyribonucleotide nucleotidyltransferase (718 aa).

2 residues coordinate Mg(2+): Asp497 and Asp503. Residues Pro564–Ile623 enclose the KH domain. The 69-residue stretch at Gly633–Leu701 folds into the S1 motif domain.

Belongs to the polyribonucleotide nucleotidyltransferase family. Mg(2+) serves as cofactor.

The protein localises to the cytoplasm. It carries out the reaction RNA(n+1) + phosphate = RNA(n) + a ribonucleoside 5'-diphosphate. In terms of biological role, involved in mRNA degradation. Catalyzes the phosphorolysis of single-stranded polyribonucleotides processively in the 3'- to 5'-direction. The sequence is that of Polyribonucleotide nucleotidyltransferase from Gloeothece citriformis (strain PCC 7424) (Cyanothece sp. (strain PCC 7424)).